Here is a 254-residue protein sequence, read N- to C-terminus: MKAVILCGGKGTRMSEVTNDIPKPLAMIGGKPILWHIMKIYQYYGVNEFILLLGYKGEKIKEYFLDYEWKHNSLTLDSSTGEVQMLGQPETWKITFLETGVDTLTAGRILQAKDYIGDETFLLTYGDGLANINLFHLISYHQTKGAAATVTGIDKVSQFGTLTVEDGMAKTFSEKTSSDGIINGGFFVLSPKVFDYLPKDGNTMFEDEPLKNLAKDGELAVYRHYGFWTAIDTYKNLLEVNKMWNQGQQVWKVW.

Substrate-binding positions include 6-10 (LCGGK), 11-13 (GTR), Lys23, Thr103, Arg108, and Gly126. Positions 127 and 232 each coordinate Mg(2+).

The protein belongs to the glucose-1-phosphate cytidylyltransferase family. Mg(2+) serves as cofactor.

The enzyme catalyses alpha-D-glucose 1-phosphate + CTP + H(+) = CDP-D-glucose + diphosphate. In terms of biological role, catalyzes the transfer of a CMP moiety from CTP to glucose 1-phosphate. This chain is Probable glucose-1-phosphate cytidylyltransferase (yfnH), found in Bacillus subtilis (strain 168).